A 145-amino-acid chain; its full sequence is D-aminoacyl-tRNA deacylase (145 aa).

The Gly-cisPro motif, important for rejection of L-amino acids signature appears at 137 to 138 (GP).

The protein belongs to the DTD family. As to quaternary structure, homodimer.

The protein localises to the cytoplasm. It catalyses the reaction glycyl-tRNA(Ala) + H2O = tRNA(Ala) + glycine + H(+). The catalysed reaction is a D-aminoacyl-tRNA + H2O = a tRNA + a D-alpha-amino acid + H(+). In terms of biological role, an aminoacyl-tRNA editing enzyme that deacylates mischarged D-aminoacyl-tRNAs. Also deacylates mischarged glycyl-tRNA(Ala), protecting cells against glycine mischarging by AlaRS. Acts via tRNA-based rather than protein-based catalysis; rejects L-amino acids rather than detecting D-amino acids in the active site. By recycling D-aminoacyl-tRNA to D-amino acids and free tRNA molecules, this enzyme counteracts the toxicity associated with the formation of D-aminoacyl-tRNA entities in vivo and helps enforce protein L-homochirality. This chain is D-aminoacyl-tRNA deacylase, found in Shigella dysenteriae serotype 1 (strain Sd197).